Here is a 113-residue protein sequence, read N- to C-terminus: Carrot ABA-induced in somatic embryos 3 (113 aa).

3 stretches are compositionally biased toward basic and acidic residues: residues 1–17 (MASGQEKRSELDARAKQ), 32–52 (EAQEHLAEGRSKGGHTRKEQL), and 65–77 (GETRREQMGKEGY). The disordered stretch occupies residues 1 to 113 (MASGQEKRSE…IDQSKFRTKS (113 aa)).

Belongs to the small hydrophilic plant seed protein family. Expressed in embryogenic cells, somatic embryos and seeds at the later stages of development. Not detected in leaves.

In Daucus carota (Wild carrot), this protein is Carrot ABA-induced in somatic embryos 3.